The sequence spans 392 residues: NAD(P)H-quinone oxidoreductase subunit H, chloroplastic (392 aa).

The protein belongs to the complex I 49 kDa subunit family. As to quaternary structure, NDH is composed of at least 16 different subunits, 5 of which are encoded in the nucleus.

The protein resides in the plastid. The protein localises to the chloroplast thylakoid membrane. It catalyses the reaction a plastoquinone + NADH + (n+1) H(+)(in) = a plastoquinol + NAD(+) + n H(+)(out). The enzyme catalyses a plastoquinone + NADPH + (n+1) H(+)(in) = a plastoquinol + NADP(+) + n H(+)(out). Functionally, NDH shuttles electrons from NAD(P)H:plastoquinone, via FMN and iron-sulfur (Fe-S) centers, to quinones in the photosynthetic chain and possibly in a chloroplast respiratory chain. The immediate electron acceptor for the enzyme in this species is believed to be plastoquinone. Couples the redox reaction to proton translocation, and thus conserves the redox energy in a proton gradient. The polypeptide is NAD(P)H-quinone oxidoreductase subunit H, chloroplastic (Marchantia polymorpha (Common liverwort)).